A 438-amino-acid chain; its full sequence is MPKPIVAIIGRPNVGKSTLFNRITGGRVAIVEDTPGVTRDRLYRDAEWCGRQFTLVDTGGIATHQDDPLVARVRSQAEQALKEADVIIFLVDSRTGITADDEEIAALLRRSDRPVILVANKVEDFSDPTVTHEFYRLGLGDPVPISAAHGLNTGDLLDRVVELLPAVPAGEEGDALKVAIVGRPNVGKSSLVNRLLGEERVIVSDLPGTTRDAVDTYIRRGEREYILIDTAGMRRKSRITVPTERYSVLRALRAVERADVVLVILDGTEGVTEQDKKIAGYGHEKGKATIIVVNKWDLVPKDERTMDHYREAVRQELSFMAYAPVLFISALTGQRVDQVLMTIDAVGEAANRRVATGTLNAVVREAVLLTPPPSVKGQEVKIYYATQVKVKPPTFVFFTNRPEGVHFSYQRYLENQLRQAFGFEGTPIRLIFRRGRER.

2 EngA-type G domains span residues 4–168 (PIVA…PAVP) and 176–351 (LKVA…EAAN). GTP-binding positions include 10–17 (GRPNVGKS), 57–61 (DTGGI), 120–123 (NKVE), 182–189 (GRPNVGKS), 229–233 (DTAGM), and 294–297 (NKWD). In terms of domain architecture, KH-like spans 352–436 (RRVATGTLNA…PIRLIFRRGR (85 aa)).

It belongs to the TRAFAC class TrmE-Era-EngA-EngB-Septin-like GTPase superfamily. EngA (Der) GTPase family. Associates with the 50S ribosomal subunit.

Functionally, GTPase that plays an essential role in the late steps of ribosome biogenesis. The protein is GTPase Der of Moorella thermoacetica (strain ATCC 39073 / JCM 9320).